The chain runs to 178 residues: Cytochrome b6-f complex iron-sulfur subunit 3 (178 aa).

A helical membrane pass occupies residues 20–42 (FITGATVAVTAGAALYPAGKFLI). Residues 65 to 161 (PASQILAEPP…VAVIDNSILI (97 aa)) enclose the Rieske domain. Positions 107, 109, 125, and 128 each coordinate [2Fe-2S] cluster. Cysteine 112 and cysteine 127 are disulfide-bonded.

This sequence belongs to the Rieske iron-sulfur protein family. The 4 large subunits of the cytochrome b6-f complex are cytochrome b6, subunit IV (17 kDa polypeptide, PetD), cytochrome f and the Rieske protein, while the 4 small subunits are PetG, PetL, PetM and PetN. The complex functions as a dimer. [2Fe-2S] cluster is required as a cofactor.

Its subcellular location is the cellular thylakoid membrane. It catalyses the reaction 2 oxidized [plastocyanin] + a plastoquinol + 2 H(+)(in) = 2 reduced [plastocyanin] + a plastoquinone + 4 H(+)(out). Component of the cytochrome b6-f complex, which mediates electron transfer between photosystem II (PSII) and photosystem I (PSI), cyclic electron flow around PSI, and state transitions. The polypeptide is Cytochrome b6-f complex iron-sulfur subunit 3 (Nostoc sp. (strain PCC 7120 / SAG 25.82 / UTEX 2576)).